The sequence spans 391 residues: 3-ketoacyl-CoA thiolase (391 aa).

Cys-95 acts as the Acyl-thioester intermediate in catalysis. Catalysis depends on proton acceptor residues His-347 and Cys-377.

Belongs to the thiolase-like superfamily. Thiolase family. Heterotetramer of two alpha chains (FadB) and two beta chains (FadA).

The protein localises to the cytoplasm. It carries out the reaction an acyl-CoA + acetyl-CoA = a 3-oxoacyl-CoA + CoA. It participates in lipid metabolism; fatty acid beta-oxidation. Its function is as follows. Catalyzes the final step of fatty acid oxidation in which acetyl-CoA is released and the CoA ester of a fatty acid two carbons shorter is formed. This is 3-ketoacyl-CoA thiolase from Vibrio parahaemolyticus serotype O3:K6 (strain RIMD 2210633).